We begin with the raw amino-acid sequence, 527 residues long: MYTLSVADHSNTPPAIKIPERYNAADDLIGRNLLAGRGGKTVYIDDAGSYTYDELALRVNRCGSALRTTLGLQPKDRVLVCVLDGIDFPTTFLGAIKGGVVPIAINTLLTESDYEYMLTDSAARVAVVSQELLPLFAPMLGKVPTLEHLVVAGGAGEDSLAALLATGSEQFEAAPTRPDDHCFWLYSSGSTGAPKGTVHIHSDLIHTAELYARPILGIREGDVVFSAAKLFFAYGLGNGLIFPLAVGATAVLMAERPTPAAVFERLRRHQPDIFYGVPTLYASMLANPDCPKEGELRLRACTSAGEALPEDVGRRWQARFGVDILDGIGSTEMLHIFLSNRAGDVHYGTSGKPVPGYRLRLIDEDGAEITTAGVAGELQISGPSSAVMYWNNPEKTAATFMGEWTRSGDKYLVNDEGYYVYAGRSDDMLKVSGIYVSPIEVESALIAHEAVLEAAVVGWEDEDHLIKPKAFIVLKPGYGAGEALRTDLKAHVKNLLAPYKYPRWIEFVDDLPKTATGKIQRFKLRSA.

This sequence belongs to the ATP-dependent AMP-binding enzyme family. Benzoate-CoA ligase subfamily. In terms of assembly, monomer.

The enzyme catalyses benzoate + ATP + CoA = benzoyl-CoA + AMP + diphosphate. In terms of biological role, catalyzes the ligation of benzoate and CoA to form benzoyl-CoA at the expense of ATP. The enzyme also ligates 2-aminobenzoate and CoA. The enzyme shows activity toward a number of benzoate derivatives. This chain is Benzoate--CoA ligase (bclA), found in Thauera aromatica.